A 372-amino-acid polypeptide reads, in one-letter code: Cytochrome b (372 aa).

A run of 4 helical transmembrane segments spans residues Phe25–Ile45, Trp69–Ile90, Trp105–Leu125, and Phe170–Ile190. Heme b contacts are provided by His75 and His89. Heme b is bound by residues His174 and His188. His193 lines the a ubiquinone pocket. 4 consecutive transmembrane segments (helical) span residues Tyr218–Ser238, Leu280–His300, Leu312–Ser332, and Phe339–Pro358.

Belongs to the cytochrome b family. In terms of assembly, the cytochrome bc1 complex contains 3 respiratory subunits (MT-CYB, CYC1 and UQCRFS1), 2 core proteins (UQCRC1 and UQCRC2) and probably 6 low-molecular weight proteins. It depends on heme b as a cofactor.

It is found in the mitochondrion inner membrane. In terms of biological role, component of the ubiquinol-cytochrome c reductase complex (complex III or cytochrome b-c1 complex) that is part of the mitochondrial respiratory chain. The b-c1 complex mediates electron transfer from ubiquinol to cytochrome c. Contributes to the generation of a proton gradient across the mitochondrial membrane that is then used for ATP synthesis. The polypeptide is Cytochrome b (MT-CYB) (Naja annulata annulata (Banded water cobra)).